The sequence spans 64 residues: Large ribosomal subunit protein bL33 (64 aa).

It belongs to the bacterial ribosomal protein bL33 family.

This is Large ribosomal subunit protein bL33 from Crocosphaera subtropica (strain ATCC 51142 / BH68) (Cyanothece sp. (strain ATCC 51142)).